The primary structure comprises 369 residues: Caffeine synthase 1 (369 aa).

An S-adenosyl-L-homocysteine-binding site is contributed by tyrosine 24. Threonine 31 contributes to the caffeine binding site. Positions 66, 71, 103, 104, 138, and 139 each coordinate S-adenosyl-L-homocysteine. Positions 156, 159, and 160 each coordinate caffeine. Asparagine 177 contributes to the Mg(2+) binding site. Position 225 (arginine 225) interacts with caffeine. The Mg(2+) site is built by aspartate 263, phenylalanine 265, and asparagine 266. Caffeine is bound at residue phenylalanine 321.

Belongs to the methyltransferase superfamily. Type-7 methyltransferase family. Mg(2+) is required as a cofactor.

The catalysed reaction is theobromine + S-adenosyl-L-methionine = caffeine + S-adenosyl-L-homocysteine + H(+). It carries out the reaction 7-methylxanthine + S-adenosyl-L-methionine = theobromine + S-adenosyl-L-homocysteine + H(+). Its pathway is alkaloid biosynthesis. Involved in the biosynthesis of caffeine. Catalyzes the conversion of 7-methylxanthine (7mX) to theobromine and of theobromine to caffeine. This is Caffeine synthase 1 from Camellia taliensis (Wild tea).